The sequence spans 73 residues: Small ribosomal subunit protein bS18 (73 aa).

Belongs to the bacterial ribosomal protein bS18 family. As to quaternary structure, part of the 30S ribosomal subunit. Forms a tight heterodimer with protein bS6.

Functionally, binds as a heterodimer with protein bS6 to the central domain of the 16S rRNA, where it helps stabilize the platform of the 30S subunit. This chain is Small ribosomal subunit protein bS18, found in Prochlorococcus marinus subsp. pastoris (strain CCMP1986 / NIES-2087 / MED4).